The sequence spans 128 residues: MCKVESPRSGVLLLRRIALERAERLLRLARTVYYEDPDRARRYVELARRIAMKARVKLPKHLKRSFCKRCNTPLIPGVTARVRLRQNRMPHVSVTCLECGYIYRYPYLREVKERRRRHMEGVKDRDAG.

Positions 67, 70, 96, and 99 each coordinate Zn(2+).

Belongs to the eukaryotic/archaeal RNase P protein component 4 family. Consists of a catalytic RNA component and at least 4-5 protein subunits. Zn(2+) is required as a cofactor.

It is found in the cytoplasm. It carries out the reaction Endonucleolytic cleavage of RNA, removing 5'-extranucleotides from tRNA precursor.. Its function is as follows. Part of ribonuclease P, a protein complex that generates mature tRNA molecules by cleaving their 5'-ends. The protein is Ribonuclease P protein component 4 of Methanopyrus kandleri (strain AV19 / DSM 6324 / JCM 9639 / NBRC 100938).